The primary structure comprises 177 residues: Bifunctional protein PyrR (177 aa).

Positions 99–111 (VVLVDDVLFTGRT) match the PRPP-binding motif.

The protein belongs to the purine/pyrimidine phosphoribosyltransferase family. PyrR subfamily.

The catalysed reaction is UMP + diphosphate = 5-phospho-alpha-D-ribose 1-diphosphate + uracil. In terms of biological role, regulates the transcription of the pyrimidine nucleotide (pyr) operon in response to exogenous pyrimidines. Its function is as follows. Also displays a weak uracil phosphoribosyltransferase activity which is not physiologically significant. The chain is Bifunctional protein PyrR from Citrifermentans bemidjiense (strain ATCC BAA-1014 / DSM 16622 / JCM 12645 / Bem) (Geobacter bemidjiensis).